The sequence spans 885 residues: Chromatin structure-remodeling complex protein RSC3 (885 aa).

The segment at residues 14 to 42 (CVQCRKRKIGCDRVKPICGNCMKHNKMDC) is a DNA-binding region (zn(2)-C6 fungal-type). Phosphoserine occurs at positions 95 and 236.

As to quaternary structure, forms a heteromer with RSC30. Interacts with LDB7 and NPL6. Component of the two forms of the RSC complex composed of at least either RSC1 or RSC2, and ARP7, ARP9, LDB7, NPL6, RSC3, RSC30, RSC4, RSC58, RSC6, RSC8, RSC9, SFH1, STH1, HTL1 and probably RTT102. The complexes interact with histone and histone variant components of centromeric chromatin. Component of a fungal-specific module (HTL1-LDB7-NPL6-RSC3-RSC30) within the RSC complex.

It localises to the nucleus. Component of the chromatin structure-remodeling complex (RSC), which is involved in transcription regulation and nucleosome positioning. RSC is responsible for the transfer of a histone octamer from a nucleosome core particle to naked DNA. The reaction requires ATP and involves an activated RSC-nucleosome intermediate. Remodeling reaction also involves DNA translocation, DNA twist and conformational change. As a reconfigurer of centromeric and flanking nucleosomes, RSC complex is required both for proper kinetochore function in chromosome segregation and, via a PKC1-dependent signaling pathway, for organization of the cellular cytoskeleton. This subunit is required for transcription of ribosomal protein genes and genes involved in the integrity of the cell wall, and also for proper metaphase progression. Together with HTL1, LDB7, NPL6, RSC30 components, defines a fungal-specific module within the RSC complex that plays a role in many cellular functions including the maintenance of cell wall integrity. The sequence is that of Chromatin structure-remodeling complex protein RSC3 (RSC3) from Saccharomyces cerevisiae (strain ATCC 204508 / S288c) (Baker's yeast).